The chain runs to 680 residues: NADPH--cytochrome P450 reductase (680 aa).

The Lumenal segment spans residues Met1–Lys5. Residues Leu6–Ala23 form a helical membrane-spanning segment. At Lys24 to Trp680 the chain is on the cytoplasmic side. The region spanning Thr60–Phe204 is the Flavodoxin-like domain. Residues Ser66–Ala71, Ala117–Gly120, Leu152–Asn161, and Asp187 each bind FMN. In terms of domain architecture, FAD-binding FR-type spans Thr264 to Phe509. Arg283 contributes to the NADP(+) binding site. Residues Arg439–Ser442, Thr457–Val459, and Gly473–Thr476 contribute to the FAD site. Residues Thr537, Ser599 to Arg600, Lys606 to Gln610, and Asp642 each bind NADP(+). Residue Trp680 participates in FAD binding.

The protein belongs to the NADPH--cytochrome P450 reductase family. In the N-terminal section; belongs to the flavodoxin family. It in the C-terminal section; belongs to the flavoprotein pyridine nucleotide cytochrome reductase family. FAD is required as a cofactor. The cofactor is FMN.

The protein resides in the endoplasmic reticulum membrane. Its subcellular location is the mitochondrion outer membrane. It is found in the cell membrane. It catalyses the reaction 2 oxidized [cytochrome P450] + NADPH = 2 reduced [cytochrome P450] + NADP(+) + H(+). In terms of biological role, this enzyme is required for electron transfer from NADP to cytochrome P450 in microsomes. It can also provide electron transfer to heme oxygenase and cytochrome B5. Involved in ergosterol biosynthesis. This chain is NADPH--cytochrome P450 reductase, found in Candida tropicalis (Yeast).